Here is an 874-residue protein sequence, read N- to C-terminus: Alanine--tRNA ligase (874 aa).

Zn(2+)-binding residues include H564, H568, C665, and H669.

Belongs to the class-II aminoacyl-tRNA synthetase family. The cofactor is Zn(2+).

The protein localises to the cytoplasm. It catalyses the reaction tRNA(Ala) + L-alanine + ATP = L-alanyl-tRNA(Ala) + AMP + diphosphate. Functionally, catalyzes the attachment of alanine to tRNA(Ala) in a two-step reaction: alanine is first activated by ATP to form Ala-AMP and then transferred to the acceptor end of tRNA(Ala). Also edits incorrectly charged Ser-tRNA(Ala) and Gly-tRNA(Ala) via its editing domain. The chain is Alanine--tRNA ligase from Cupriavidus metallidurans (strain ATCC 43123 / DSM 2839 / NBRC 102507 / CH34) (Ralstonia metallidurans).